A 197-amino-acid chain; its full sequence is Probable GTP-binding protein EngB (197 aa).

The EngB-type G domain maps to 22–195 (GYPEIALVGR…WNWIEAQAFG (174 aa)). GTP-binding positions include 30 to 37 (GRSNVGKS), 57 to 61 (GKTQT), 75 to 78 (DVPG), 142 to 145 (TKSD), and 174 to 176 (FSA). Positions 37 and 59 each coordinate Mg(2+).

It belongs to the TRAFAC class TrmE-Era-EngA-EngB-Septin-like GTPase superfamily. EngB GTPase family. The cofactor is Mg(2+).

Its function is as follows. Necessary for normal cell division and for the maintenance of normal septation. The sequence is that of Probable GTP-binding protein EngB from Levilactobacillus brevis (strain ATCC 367 / BCRC 12310 / CIP 105137 / JCM 1170 / LMG 11437 / NCIMB 947 / NCTC 947) (Lactobacillus brevis).